The sequence spans 173 residues: Alpha-crystallin A chain (173 aa).

N-acetylmethionine is present on Met1. Residues 52 to 162 form the sHSP domain; that stretch reads LFRGFMDSGI…SHSERPIPVS (111 aa). Zn(2+) contacts are provided by His100, Glu102, His107, and His154. The tract at residues 146–173 is disordered; it reads MMSGLDSSHSERPIPVSREEKPTSAPSS. Over residues 153–167 the composition is skewed to basic and acidic residues; sequence SHSERPIPVSREEKP.

Belongs to the small heat shock protein (HSP20) family. As to quaternary structure, heteropolymer composed of three CRYAA and one CRYAB subunits. Inter-subunit bridging via zinc ions enhances stability, which is crucial as there is no protein turn over in the lens. Can also form homodimers and homotetramers (dimers of dimers) which serve as the building blocks of homooligomers. Within homooligomers, the zinc-binding motif is created from residues of 3 different molecules. His-100 and Glu-102 from one molecule are ligands of the zinc ion, and His-107 and His-154 residues from additional molecules complete the site with tetrahedral coordination geometry.

Its subcellular location is the cytoplasm. The protein localises to the nucleus. Contributes to the transparency and refractive index of the lens. May act as a chaperone, preventing aggregation of various proteins under a wide range of stress conditions. The protein is Alpha-crystallin A chain (CRYAA) of Aquarana catesbeiana (American bullfrog).